A 427-amino-acid polypeptide reads, in one-letter code: Glutamate-1-semialdehyde 2,1-aminomutase 1 (427 aa).

The residue at position 267 (K267) is an N6-(pyridoxal phosphate)lysine.

It belongs to the class-III pyridoxal-phosphate-dependent aminotransferase family. HemL subfamily. Homodimer. Requires pyridoxal 5'-phosphate as cofactor.

The protein localises to the cytoplasm. It catalyses the reaction (S)-4-amino-5-oxopentanoate = 5-aminolevulinate. It functions in the pathway porphyrin-containing compound metabolism; protoporphyrin-IX biosynthesis; 5-aminolevulinate from L-glutamyl-tRNA(Glu): step 2/2. This is Glutamate-1-semialdehyde 2,1-aminomutase 1 from Macrococcus caseolyticus (strain JCSC5402) (Macrococcoides caseolyticum).